Reading from the N-terminus, the 480-residue chain is Cobyric acid synthase (480 aa).

One can recognise a GATase cobBQ-type domain in the interval 246–434; that stretch reads KILIAVPILP…VHGLFSELAQ (189 aa). Cys328 (nucleophile) is an active-site residue. The active site involves His426.

The protein belongs to the CobB/CobQ family. CobQ subfamily.

The protein operates within cofactor biosynthesis; adenosylcobalamin biosynthesis. Its function is as follows. Catalyzes amidations at positions B, D, E, and G on adenosylcobyrinic A,C-diamide. NH(2) groups are provided by glutamine, and one molecule of ATP is hydrogenolyzed for each amidation. This chain is Cobyric acid synthase, found in Methylocella silvestris (strain DSM 15510 / CIP 108128 / LMG 27833 / NCIMB 13906 / BL2).